A 73-amino-acid chain; its full sequence is Translation initiation factor IF-1 (73 aa).

The S1-like domain occupies 1 to 72 (MAKEEAIEKD…SKGRIVYRYK (72 aa)).

It belongs to the IF-1 family. As to quaternary structure, component of the 30S ribosomal translation pre-initiation complex which assembles on the 30S ribosome in the order IF-2 and IF-3, IF-1 and N-formylmethionyl-tRNA(fMet); mRNA recruitment can occur at any time during PIC assembly.

The protein localises to the cytoplasm. In terms of biological role, one of the essential components for the initiation of protein synthesis. Stabilizes the binding of IF-2 and IF-3 on the 30S subunit to which N-formylmethionyl-tRNA(fMet) subsequently binds. Helps modulate mRNA selection, yielding the 30S pre-initiation complex (PIC). Upon addition of the 50S ribosomal subunit IF-1, IF-2 and IF-3 are released leaving the mature 70S translation initiation complex. The sequence is that of Translation initiation factor IF-1 from Salinibacter ruber (strain DSM 13855 / M31).